We begin with the raw amino-acid sequence, 413 residues long: Histidine--tRNA ligase (413 aa).

It belongs to the class-II aminoacyl-tRNA synthetase family. As to quaternary structure, homodimer.

The protein localises to the cytoplasm. It carries out the reaction tRNA(His) + L-histidine + ATP = L-histidyl-tRNA(His) + AMP + diphosphate + H(+). The protein is Histidine--tRNA ligase of Wolbachia sp. subsp. Brugia malayi (strain TRS).